The following is a 30-amino-acid chain: Acidic phospholipase A2 homolog cannitoxin gamma chain (30 aa).

In terms of assembly, heterotrimer of alpha, beta, and gamma chains; non-covalently linked. Post-translationally, glycosylated. In terms of tissue distribution, expressed by the venom gland.

It localises to the secreted. In terms of biological role, heterotrimer: Snake venom phospholipase A2 (PLA2) heterotrimer that acts as a potent presynaptic neurotoxin by blocking synaptic transmission and synaptic vesicle recycling. Enzymatic activity is essential for the neurotoxic effects. May act by binding in a calcium-dependent fashion to neurotonal pentraxin-1 (NPTX1) and neurotonal pentraxin-2 (NPTX2), but not to neuronal pentraxin receptor (NPTXR). Also binds to taipoxin-associated calcium binding protein 49 (RCN2), a protein localized in the lumen of endoplasmic reticulum. Its function is as follows. Monomer (gamma chain): Snake venom phospholipase A2 homolog that is neither toxic nor enzymatically active. Does not bind calcium. The sequence is that of Acidic phospholipase A2 homolog cannitoxin gamma chain from Oxyuranus scutellatus canni (Papuan taipan).